The primary structure comprises 274 residues: 4-deoxy-L-threo-5-hexosulose-uronate ketol-isomerase (274 aa).

The Zn(2+) site is built by His192, His194, Glu199, and His241.

The protein belongs to the KduI family. The cofactor is Zn(2+).

The enzyme catalyses 5-dehydro-4-deoxy-D-glucuronate = 3-deoxy-D-glycero-2,5-hexodiulosonate. It functions in the pathway glycan metabolism; pectin degradation; 2-dehydro-3-deoxy-D-gluconate from pectin: step 4/5. In terms of biological role, catalyzes the isomerization of 5-dehydro-4-deoxy-D-glucuronate to 3-deoxy-D-glycero-2,5-hexodiulosonate. The chain is 4-deoxy-L-threo-5-hexosulose-uronate ketol-isomerase from Cereibacter sphaeroides (strain ATCC 17029 / ATH 2.4.9) (Rhodobacter sphaeroides).